A 677-amino-acid chain; its full sequence is DNA polymerase epsilon subunit B (677 aa).

Belongs to the DNA polymerase epsilon subunit B family. In terms of assembly, heterotetramer. Consists of four subunits: POL2, DPB2, DPB3 and DPB4.

It localises to the nucleus. Its function is as follows. As accessory component of the DNA polymerase epsilon (DNA polymerase II) participates in chromosomal DNA replication. This Eremothecium gossypii (strain ATCC 10895 / CBS 109.51 / FGSC 9923 / NRRL Y-1056) (Yeast) protein is DNA polymerase epsilon subunit B (DPB2).